The following is a 180-amino-acid chain: Large ribosomal subunit protein uL5 (180 aa).

This sequence belongs to the universal ribosomal protein uL5 family. Part of the 50S ribosomal subunit; part of the 5S rRNA/L5/L18/L25 subcomplex. Contacts the 5S rRNA and the P site tRNA. Forms a bridge to the 30S subunit in the 70S ribosome.

Functionally, this is one of the proteins that bind and probably mediate the attachment of the 5S RNA into the large ribosomal subunit, where it forms part of the central protuberance. In the 70S ribosome it contacts protein S13 of the 30S subunit (bridge B1b), connecting the 2 subunits; this bridge is implicated in subunit movement. Contacts the P site tRNA; the 5S rRNA and some of its associated proteins might help stabilize positioning of ribosome-bound tRNAs. This Rubrobacter xylanophilus (strain DSM 9941 / JCM 11954 / NBRC 16129 / PRD-1) protein is Large ribosomal subunit protein uL5.